The primary structure comprises 316 residues: Ribosomal protein L11 methyltransferase (316 aa).

Residues threonine 157, glycine 178, aspartate 200, and asparagine 243 each coordinate S-adenosyl-L-methionine.

This sequence belongs to the methyltransferase superfamily. PrmA family.

It localises to the cytoplasm. The catalysed reaction is L-lysyl-[protein] + 3 S-adenosyl-L-methionine = N(6),N(6),N(6)-trimethyl-L-lysyl-[protein] + 3 S-adenosyl-L-homocysteine + 3 H(+). In terms of biological role, methylates ribosomal protein L11. The polypeptide is Ribosomal protein L11 methyltransferase (Streptococcus pneumoniae serotype 4 (strain ATCC BAA-334 / TIGR4)).